Reading from the N-terminus, the 338-residue chain is MLSLNEIKFPVHWNLKPNPTSYVDHVYQEGLEFGVWRPDNKRDIVAHNNVVSLSKFFWPTVDFERLVMGGELMLWFFTFDDALDSGIYDDTKSLEIVRRMSAVFMEGTLCDDASGPEKVGYRLRQKCLEMCGKRRRDTFNRFITSCVQWIDSIIPFNKVKDGGSPHIELYSFLRKINIGAYPCVTLSEVFIDHYLDHSIWSSPRWVKMNENIAIVVTLINDLVSYEKEVNDNAGALNPLYFFQQQRKFNLPDSYNHMVNLIHFFVQDYLANEESFLKSLEPFENEKQQQDIYFMLDHLHFLISGSRMWSMQTPRYCSPTSPFIEMRPSFNQGNLMSKL.

The short motif at 80–85 (DDALDS) is the DDxx(x)D/E motif element. Positions 220-228 (NDLVSYEKE) match the NDxxSxxxD/E motif motif.

This sequence belongs to the terpene synthase family.

The catalysed reaction is (2E,6E)-farnesyl diphosphate = (2S,3R,6S,9S)-(-)-protoillud-7-ene + diphosphate. Functionally, terpene synthase that converts its substrate farnesyl diphosphate (FPP) into the sesquiterpene protoillud-7-ene. This is Terpene synthase 1 from Cavenderia fasciculata (Slime mold).